The sequence spans 170 residues: MPYPKQMVEPMRKELTQLGVEELRTPDEVDAAFDQAEDETMLLVINSVCGCAAGNARPAVAKAKDATDHHPDRYLTVFAGQDLEATERTREYLAGIPPSSPFFALFRDGQPVYVVERKHIEGRNADVIARDLVEAFEAYCGDEEPPADAPSRPDPSSSGEGLPSTFQSIT.

Residues 140–170 (CGDEEPPADAPSRPDPSSSGEGLPSTFQSIT) are disordered.

It belongs to the bacilliredoxin family.

This chain is Bacilliredoxin SRU_1493, found in Salinibacter ruber (strain DSM 13855 / M31).